Reading from the N-terminus, the 190-residue chain is Translation initiation factor IF-3 (190 aa).

This sequence belongs to the IF-3 family. As to quaternary structure, monomer.

Its subcellular location is the cytoplasm. IF-3 binds to the 30S ribosomal subunit and shifts the equilibrium between 70S ribosomes and their 50S and 30S subunits in favor of the free subunits, thus enhancing the availability of 30S subunits on which protein synthesis initiation begins. In Prochlorococcus marinus (strain AS9601), this protein is Translation initiation factor IF-3.